The primary structure comprises 246 residues: Ly6/PLAUR domain-containing protein 4 (246 aa).

A signal peptide spans 1–26; that stretch reads MGPQHLRLVQLFCLLGAISTLPRAGA. Asn-117 is a glycosylation site (N-linked (GlcNAc...) asparagine). The UPAR/Ly6 domain occupies 142-223; it reads CPTCVGEHMK…LNILEKSQIV (82 aa). A lipid anchor (GPI-anchor amidated alanine) is attached at Ala-225. Positions 226–246 are cleaved as a propeptide — removed in mature form; sequence ASSRQDPAWGVVLGLLFAFRD.

Its subcellular location is the cell membrane. The sequence is that of Ly6/PLAUR domain-containing protein 4 (LYPD4) from Homo sapiens (Human).